Consider the following 338-residue polypeptide: Heat-inducible transcription repressor HrcA (338 aa).

It belongs to the HrcA family.

Its function is as follows. Negative regulator of class I heat shock genes (grpE-dnaK-dnaJ and groELS operons). Prevents heat-shock induction of these operons. In Thermotoga sp. (strain RQ2), this protein is Heat-inducible transcription repressor HrcA.